We begin with the raw amino-acid sequence, 361 residues long: Peptide chain release factor 1 (361 aa).

An N5-methylglutamine modification is found at Q235.

This sequence belongs to the prokaryotic/mitochondrial release factor family. Post-translationally, methylated by PrmC. Methylation increases the termination efficiency of RF1.

Its subcellular location is the cytoplasm. In terms of biological role, peptide chain release factor 1 directs the termination of translation in response to the peptide chain termination codons UAG and UAA. In Xanthomonas campestris pv. campestris (strain 8004), this protein is Peptide chain release factor 1.